A 560-amino-acid chain; its full sequence is Cytosolic purine 5'-nucleotidase (560 aa).

The Nucleophile role is filled by Asp-52. The IMP site is built by Asp-52 and Asp-54. Residues Asp-52 and Asp-54 each contribute to the Mg(2+) site. The Proton donor role is filled by Asp-54. ATP contacts are provided by Arg-144 and Asn-154. IMP contacts are provided by Arg-202, Asp-206, Lys-215, Thr-249, Asn-250, Ser-251, and Lys-292. Asp-351 lines the Mg(2+) pocket. Ser-418 is subject to Phosphoserine. ATP contacts are provided by Gln-453 and Arg-456. A phosphoserine mark is found at Ser-502, Ser-511, and Ser-527. The tract at residues 541 to 560 is disordered; the sequence is PQEITHCHDEDDDEEEEEEE. A required for tetramer assembly region spans residues 548 to 560; it reads HDEDDDEEEEEEE. Positions 550–560 are enriched in acidic residues; that stretch reads EDDDEEEEEEE.

The protein belongs to the 5'(3')-deoxyribonucleotidase family. As to quaternary structure, homotetramer. Mg(2+) is required as a cofactor.

Its subcellular location is the cytoplasm. It is found in the cytosol. It carries out the reaction a ribonucleoside 5'-phosphate + H2O = a ribonucleoside + phosphate. It catalyses the reaction a 2'-deoxyribonucleoside + a ribonucleoside 5'-phosphate = a ribonucleoside + a 2'-deoxyribonucleoside 5'-phosphate. The enzyme catalyses IMP + H2O = inosine + phosphate. The catalysed reaction is GMP + H2O = guanosine + phosphate. It carries out the reaction dIMP + H2O = 2'-deoxyinosine + phosphate. It catalyses the reaction dGMP + H2O = 2'-deoxyguanosine + phosphate. The enzyme catalyses XMP + H2O = xanthosine + phosphate. The catalysed reaction is inosine + GMP = guanosine + IMP. It carries out the reaction dGMP + inosine = 2'-deoxyguanosine + IMP. It catalyses the reaction dIMP + inosine = 2'-deoxyinosine + IMP. The enzyme catalyses inosine + UMP = uridine + IMP. The catalysed reaction is inosine + CMP = cytidine + IMP. It carries out the reaction inosine + AMP = IMP + adenosine. Its activity is regulated as follows. Allosterically activated by various compounds including ATP, 2,3-BPG/2,3-Bisphosphoglyceric acid and Ap4A/P1,P4-bis(5'-adenosyl) tetraphosphate. Binding of an allosteric activator is a prerequisiste to magnesium and substrate binding. Inhibited by inorganic phosphate. Functionally, broad specificity cytosolic 5'-nucleotidase that catalyzes the dephosphorylation of 6-hydroxypurine nucleoside 5'-monophosphates. In addition, possesses a phosphotransferase activity by which it can transfer a phosphate from a donor nucleoside monophosphate to an acceptor nucleoside, preferably inosine, deoxyinosine and guanosine. Has the highest activities for IMP and GMP followed by dIMP, dGMP and XMP. Could also catalyze the transfer of phosphates from pyrimidine monophosphates but with lower efficiency. Through these activities regulates the purine nucleoside/nucleotide pools within the cell. The polypeptide is Cytosolic purine 5'-nucleotidase (Bos taurus (Bovine)).